A 359-amino-acid chain; its full sequence is MKSIGLNLSGREYKILIGSDLLSETATLLREAIPCDRVVVITNIDINRIYGKKLKKHLESKGIESLFLELPEGEIHKTLDMAAHIYPQLINHFAERNTPILALGGGVIGDLSGFVAATYQRGVPLIHLPTSLLSQVDSSIGGKVAVNHGGVKNIVGSFYQPRLVIADTGCLKTLPEKEFACGMAEIIKSAAIGSSELFRLLETNTQAVKDRSPEVMEDIVSQTAAIKASIVCQDETDRGIRNILNFGHTLGHALESTSSFSQSHGAAVAIGMCFAARLSVRLGLCENETALRLEKLIADFGLPTNPKDIDPDKIIEAMHHDKKVSDGRIRFILLKRPGEALIAENILKPDVLSVLEEMK.

NAD(+) contacts are provided by residues 72–77, 106–110, 130–131, lysine 143, lysine 152, and 170–173; these read EGEIHK, GVIGD, TS, and CLKT. The Zn(2+) site is built by glutamate 185, histidine 248, and histidine 264.

The protein belongs to the sugar phosphate cyclases superfamily. Dehydroquinate synthase family. It depends on Co(2+) as a cofactor. Zn(2+) serves as cofactor. Requires NAD(+) as cofactor.

It localises to the cytoplasm. It carries out the reaction 7-phospho-2-dehydro-3-deoxy-D-arabino-heptonate = 3-dehydroquinate + phosphate. The protein operates within metabolic intermediate biosynthesis; chorismate biosynthesis; chorismate from D-erythrose 4-phosphate and phosphoenolpyruvate: step 2/7. Functionally, catalyzes the conversion of 3-deoxy-D-arabino-heptulosonate 7-phosphate (DAHP) to dehydroquinate (DHQ). This is 3-dehydroquinate synthase from Dehalococcoides mccartyi (strain CBDB1).